Consider the following 132-residue polypeptide: MGGCVGKGRRHIEEDKLDFKGGNVHVITSKEDWDRKIEEANKDGKIVVANFSASWCGPCRVIAPIYAEMSKTYPQLMFLTIDVDDLMDFSSSWDIRATPTFFFIKNEKQVDKLVGANKPELEKKVQALADGS.

Residues Asp-18–Asp-130 form the Thioredoxin domain. Active-site nucleophile residues include Cys-56 and Cys-59. Cys-56 and Cys-59 are disulfide-bonded.

This sequence belongs to the thioredoxin family. Plant H-type subfamily.

It is found in the cytoplasm. Its function is as follows. Probable thiol-disulfide oxidoreductase that may be involved in the redox regulation of a number of cytosolic enzymes. In Oryza sativa subsp. japonica (Rice), this protein is Thioredoxin H4-2.